We begin with the raw amino-acid sequence, 280 residues long: Meiotic spindle formation protein 2 (280 aa).

The disordered stretch occupies residues 1–104 (MSGLDDRKKL…LPKSSPESSV (104 aa)). The span at 72-92 (LHSESKKELSRNPVSRGEEHS) shows a compositional bias: basic and acidic residues. The span at 93–104 (SSLPKSSPESSV) shows a compositional bias: low complexity.

As to quaternary structure, interacts with mei-1.

The protein resides in the cytoplasm. Its subcellular location is the cytoskeleton. The protein localises to the spindle pole. Its function is as follows. Forms a heterodimeric complex in conjunction with mei-1 which severs microtubules in vitro in an ATP-dependent manner. This activity may promote rapid reorganization of cellular microtubule arrays. May act to target mei-1 within the cell. Required specifically for meiotic spindle formation in the female germline. The protein is Meiotic spindle formation protein 2 (mei-2) of Caenorhabditis elegans.